We begin with the raw amino-acid sequence, 127 residues long: Small ribosomal subunit protein uS12 (127 aa).

Asp89 bears the 3-methylthioaspartic acid mark.

This sequence belongs to the universal ribosomal protein uS12 family. As to quaternary structure, part of the 30S ribosomal subunit. Contacts proteins S8 and S17. May interact with IF1 in the 30S initiation complex.

With S4 and S5 plays an important role in translational accuracy. Functionally, interacts with and stabilizes bases of the 16S rRNA that are involved in tRNA selection in the A site and with the mRNA backbone. Located at the interface of the 30S and 50S subunits, it traverses the body of the 30S subunit contacting proteins on the other side and probably holding the rRNA structure together. The combined cluster of proteins S8, S12 and S17 appears to hold together the shoulder and platform of the 30S subunit. The sequence is that of Small ribosomal subunit protein uS12 from Nautilia profundicola (strain ATCC BAA-1463 / DSM 18972 / AmH).